Consider the following 254-residue polypeptide: 3-deoxy-manno-octulosonate cytidylyltransferase (254 aa).

This sequence belongs to the KdsB family.

It is found in the cytoplasm. It catalyses the reaction 3-deoxy-alpha-D-manno-oct-2-ulosonate + CTP = CMP-3-deoxy-beta-D-manno-octulosonate + diphosphate. The protein operates within nucleotide-sugar biosynthesis; CMP-3-deoxy-D-manno-octulosonate biosynthesis; CMP-3-deoxy-D-manno-octulosonate from 3-deoxy-D-manno-octulosonate and CTP: step 1/1. It functions in the pathway bacterial outer membrane biogenesis; lipopolysaccharide biosynthesis. Activates KDO (a required 8-carbon sugar) for incorporation into bacterial lipopolysaccharide in Gram-negative bacteria. The polypeptide is 3-deoxy-manno-octulosonate cytidylyltransferase (Pseudomonas paraeruginosa (strain DSM 24068 / PA7) (Pseudomonas aeruginosa (strain PA7))).